The following is a 124-amino-acid chain: MATTNQLIRKGRTTLVEKSKVPALKACPQRRGVCTRVYTTTPKKPNSAMRKVCRVRLTSGFEVSSYIGGEGHNLQEHSVVLIRGGRVKDLPGVRYHTVRGSLDCAGVKDRNQSRSKYGTKRPKK.

Position 89 is a 3-methylthioaspartic acid (D89).

Belongs to the universal ribosomal protein uS12 family. Part of the 30S ribosomal subunit. Contacts proteins S8 and S17. May interact with IF1 in the 30S initiation complex.

Its function is as follows. With S4 and S5 plays an important role in translational accuracy. In terms of biological role, interacts with and stabilizes bases of the 16S rRNA that are involved in tRNA selection in the A site and with the mRNA backbone. Located at the interface of the 30S and 50S subunits, it traverses the body of the 30S subunit contacting proteins on the other side and probably holding the rRNA structure together. The combined cluster of proteins S8, S12 and S17 appears to hold together the shoulder and platform of the 30S subunit. This chain is Small ribosomal subunit protein uS12, found in Acinetobacter baylyi (strain ATCC 33305 / BD413 / ADP1).